The primary structure comprises 432 residues: Glutamyl-tRNA reductase (432 aa).

Substrate is bound by residues 50–53, Ser110, 115–117, and Gln121; these read TCNR and ETQ. Cys51 serves as the catalytic Nucleophile. NADP(+) is bound at residue 190–195; the sequence is GVGEMS.

It belongs to the glutamyl-tRNA reductase family. Homodimer.

It carries out the reaction (S)-4-amino-5-oxopentanoate + tRNA(Glu) + NADP(+) = L-glutamyl-tRNA(Glu) + NADPH + H(+). It participates in porphyrin-containing compound metabolism; protoporphyrin-IX biosynthesis; 5-aminolevulinate from L-glutamyl-tRNA(Glu): step 1/2. In terms of biological role, catalyzes the NADPH-dependent reduction of glutamyl-tRNA(Glu) to glutamate 1-semialdehyde (GSA). In Sulfurimonas denitrificans (strain ATCC 33889 / DSM 1251) (Thiomicrospira denitrificans (strain ATCC 33889 / DSM 1251)), this protein is Glutamyl-tRNA reductase.